A 2183-amino-acid chain; its full sequence is Genome polyprotein (2183 aa).

Gly2 carries N-myristoyl glycine; by host lipidation. Over 2-1493 (GAQVSTQKTG…HVSRAFICLQ (1492 aa)) the chain is Cytoplasmic. Residues 566–582 (FYQGPTEESVERAMGRV) form an amphipathic alpha-helix region. Residues His870 and Asp888 each act as for protease 2A activity in the active site. 2 residues coordinate Zn(2+): Cys905 and Cys907. Catalysis depends on Cys959, which acts as the For protease 2A activity. Positions 965 and 967 each coordinate Zn(2+). Residues 1099 to 1171 (NNNWLKKFTE…EQSAPSQSDQ (73 aa)) form a membrane-binding region. The segment at 1099–1237 (NNNWLKKFTE…SPGAGKSVAT (139 aa)) is oligomerization. The tract at residues 1120-1124 (AVKIQ) is RNA-binding. Positions 1203-1359 (EKKMSNYIQF…SMYSQNGKIN (157 aa)) constitute an SF3 helicase domain. Zn(2+)-binding residues include Cys1367, Cys1379, and Cys1384. The C4-type; degenerate zinc-finger motif lies at 1367-1384 (CDEECCPVNFKKCCPLVC). An RNA-binding region spans residues 1411–1418 (EYNHRHSV). Residues 1422 to 1427 (LEALFQ) form an oligomerization region. An intramembrane segment occupies 1494-1509 (ALTTFVSVAGIIYIIY). At 1510-2183 (KLFAGFQGAY…TLRRKWLDAF (674 aa)) the chain is on the cytoplasmic side. Tyr1519 carries the O-(5'-phospho-RNA)-tyrosine modification. The Peptidase C3 domain occupies 1539 to 1717 (GPAFEFAVAM…FSASLLRHYF (179 aa)). Active-site for protease 3C activity residues include His1578, Glu1609, and Cys1685. In terms of domain architecture, RdRp catalytic spans 1948 to 2064 (GHLRAFDYSG…SYPLPIDASL (117 aa)). Residues Asp1954 and Asp2050 each coordinate Mg(2+).

This sequence belongs to the picornaviruses polyprotein family. In terms of assembly, interacts with capsid protein VP1 and capsid protein VP3 to form heterotrimeric protomers. Interacts with capsid protein VP0, and capsid protein VP3 to form heterotrimeric protomers. Five protomers subsequently associate to form pentamers which serve as building blocks for the capsid. Interacts with capsid protein VP2, capsid protein VP3 and capsid protein VP4 following cleavage of capsid protein VP0. Interacts with host CXADR. As to quaternary structure, interacts with capsid protein VP1 and capsid protein VP3 in the mature capsid. In terms of assembly, interacts with capsid protein VP0 and capsid protein VP1 to form heterotrimeric protomers. Five protomers subsequently associate to form pentamers which serve as building blocks for the capsid. Interacts with capsid protein VP4 in the mature capsid. Interacts with protein 2C; this interaction may be important for virion morphogenesis. Interacts with capsid protein VP1 and capsid protein VP3. As to quaternary structure, homodimer. In terms of assembly, homohexamer; forms a hexameric ring structure with 6-fold symmetry characteristic of AAA+ ATPases. Interacts (via N-terminus) with host RTN3 (via reticulon domain); this interaction is important for viral replication. Interacts with capsid protein VP3; this interaction may be important for virion morphogenesis. Interacts with protein 3CD. As to quaternary structure, homodimer. Interacts with host GBF1. Interacts (via GOLD domain) with host ACBD3 (via GOLD domain); this interaction allows the formation of a viral protein 3A/ACBD3 heterotetramer with a 2:2 stoichiometry, which will stimulate the recruitment of host PI4KB in order to synthesize PI4P at the viral RNA replication sites. In terms of assembly, interacts with RNA-directed RNA polymerase. Interacts with protein 3AB and with RNA-directed RNA polymerase. As to quaternary structure, interacts with Viral protein genome-linked and with protein 3CD. Requires Mg(2+) as cofactor. Post-translationally, specific enzymatic cleavages in vivo by the viral proteases yield processing intermediates and the mature proteins. Myristoylation is required for the formation of pentamers during virus assembly. Further assembly of 12 pentamers and a molecule of genomic RNA generates the provirion. In terms of processing, during virion maturation, immature virions are rendered infectious following cleavage of VP0 into VP4 and VP2. This maturation seems to be an autocatalytic event triggered by the presence of RNA in the capsid and it is followed by a conformational change infectious virion. Post-translationally, myristoylation is required during RNA encapsidation and formation of the mature virus particle. VPg is uridylylated by the polymerase into VPg-pUpU. This acts as a nucleotide-peptide primer for the genomic RNA replication.

It is found in the virion. The protein resides in the host cytoplasm. It localises to the host cytoplasmic vesicle membrane. Its subcellular location is the host nucleus. The enzyme catalyses a ribonucleoside 5'-triphosphate + H2O = a ribonucleoside 5'-diphosphate + phosphate + H(+). It carries out the reaction Selective cleavage of Tyr-|-Gly bond in the picornavirus polyprotein.. It catalyses the reaction RNA(n) + a ribonucleoside 5'-triphosphate = RNA(n+1) + diphosphate. The catalysed reaction is Selective cleavage of Gln-|-Gly bond in the poliovirus polyprotein. In other picornavirus reactions Glu may be substituted for Gln, and Ser or Thr for Gly.. Its activity is regulated as follows. Replication or transcription is subject to high level of random mutations by the nucleotide analog ribavirin. In terms of biological role, forms an icosahedral capsid of pseudo T=3 symmetry with capsid proteins VP2 and VP3. The capsid is 300 Angstroms in diameter, composed of 60 copies of each capsid protein and enclosing the viral positive strand RNA genome. Capsid protein VP1 mainly forms the vertices of the capsid. Capsid protein VP1 interacts with host CXADR to provide virion attachment to target host cells. This attachment induces virion internalization. Tyrosine kinases are probably involved in the entry process. After binding to its receptor, the capsid undergoes conformational changes. Capsid protein VP1 N-terminus (that contains an amphipathic alpha-helix) and capsid protein VP4 are externalized. Together, they shape a pore in the host membrane through which viral genome is translocated to host cell cytoplasm. Its function is as follows. Forms an icosahedral capsid of pseudo T=3 symmetry with capsid proteins VP2 and VP3. The capsid is 300 Angstroms in diameter, composed of 60 copies of each capsid protein and enclosing the viral positive strand RNA genome. Functionally, lies on the inner surface of the capsid shell. After binding to the host receptor, the capsid undergoes conformational changes. Capsid protein VP4 is released, Capsid protein VP1 N-terminus is externalized, and together, they shape a pore in the host membrane through which the viral genome is translocated into the host cell cytoplasm. Component of immature procapsids, which is cleaved into capsid proteins VP4 and VP2 after maturation. Allows the capsid to remain inactive before the maturation step. In terms of biological role, cysteine protease that cleaves viral polyprotein and specific host proteins. It is responsible for the autocatalytic cleavage between the P1 and P2 regions, which is the first cleavage occurring in the polyprotein. Also cleaves the host translation initiation factor EIF4G1, in order to shut down the capped cellular mRNA translation. Inhibits the host nucleus-cytoplasm protein and RNA trafficking by cleaving host members of the nuclear pores. Counteracts stress granule formation probably by antagonizing its assembly or promoting its dissassembly. Cleaves and inhibits host IFIH1/MDA5, thereby inhibiting the type-I IFN production and the establishment of the antiviral state. Cleaves and inhibits host MAVS, thereby inhibiting the type-I IFN production and the establishment of the antiviral state. Its function is as follows. Plays an essential role in the virus replication cycle by acting as a viroporin. Creates a pore in the host endoplasmic reticulum and as a consequence releases Ca2+ in the cytoplasm of infected cell. In turn, high levels of cytoplasmic calcium may trigger membrane trafficking and transport of viral ER-associated proteins to viroplasms, sites of viral genome replication. Functionally, induces and associates with structural rearrangements of intracellular membranes. Displays RNA-binding, nucleotide binding and NTPase activities. May play a role in virion morphogenesis and viral RNA encapsidation by interacting with the capsid protein VP3. Localizes the viral replication complex to the surface of membranous vesicles. Together with protein 3CD binds the Cis-Active RNA Element (CRE) which is involved in RNA synthesis initiation. Acts as a cofactor to stimulate the activity of 3D polymerase, maybe through a nucleid acid chaperone activity. In terms of biological role, localizes the viral replication complex to the surface of membranous vesicles. It inhibits host cell endoplasmic reticulum-to-Golgi apparatus transport and causes the disassembly of the Golgi complex, possibly through GBF1 interaction. This would result in depletion of MHC, trail receptors and IFN receptors at the host cell surface. Plays an essential role in viral RNA replication by recruiting ACBD3 and PI4KB at the viral replication sites, thereby allowing the formation of the rearranged membranous structures where viral replication takes place. Its function is as follows. Acts as a primer for viral RNA replication and remains covalently bound to viral genomic RNA. VPg is uridylylated prior to priming replication into VPg-pUpU. The oriI viral genomic sequence may act as a template for this. The VPg-pUpU is then used as primer on the genomic RNA poly(A) by the RNA-dependent RNA polymerase to replicate the viral genome. During genome replication, the VPg-RNA linkage is removed by the host TDP2, thereby accelerating replication. During the late stage of the replication cycle, host TDP2 is excluded from sites of viral RNA synthesis and encapsidation, allowing for the generation of progeny virions. Functionally, involved in the viral replication complex and viral polypeptide maturation. It exhibits protease activity with a specificity and catalytic efficiency that is different from protease 3C. Protein 3CD lacks polymerase activity. Protein 3CD binds to the 5'UTR of the viral genome. Replicates the viral genomic RNA on the surface of intracellular membranes. May form linear arrays of subunits that propagate along a strong head-to-tail interaction called interface-I. Covalently attaches UMP to a tyrosine of VPg, which is used to prime RNA synthesis. The positive stranded RNA genome is first replicated at virus induced membranous vesicles, creating a dsRNA genomic replication form. This dsRNA is then used as template to synthesize positive stranded RNA genomes. ss(+)RNA genomes are either translated, replicated or encapsidated. In terms of biological role, major viral protease that mediates proteolytic processing of the polyprotein. Cleaves host EIF5B, contributing to host translation shutoff. Also cleaves host PABPC1, contributing to host translation shutoff. Cleaves host NLRP1, triggers host N-glycine-mediated degradation of the autoinhibitory NLRP1 N-terminal fragment. This chain is Genome polyprotein, found in Coxsackievirus B4 (strain E2).